The primary structure comprises 413 residues: Multifunctional CCA protein (413 aa).

ATP-binding residues include Gly-8 and Arg-11. 2 residues coordinate CTP: Gly-8 and Arg-11. Mg(2+) contacts are provided by Glu-21 and Asp-23. 3 residues coordinate ATP: Arg-91, Arg-137, and Arg-140. Positions 91, 137, and 140 each coordinate CTP. Residues 228-329 form the HD domain; sequence TGEHTLLALA…LKLLEGLDLF (102 aa).

This sequence belongs to the tRNA nucleotidyltransferase/poly(A) polymerase family. Bacterial CCA-adding enzyme type 1 subfamily. As to quaternary structure, monomer. Can also form homodimers and oligomers. The cofactor is Mg(2+). It depends on Ni(2+) as a cofactor.

It carries out the reaction a tRNA precursor + 2 CTP + ATP = a tRNA with a 3' CCA end + 3 diphosphate. The enzyme catalyses a tRNA with a 3' CCA end + 2 CTP + ATP = a tRNA with a 3' CCACCA end + 3 diphosphate. In terms of biological role, catalyzes the addition and repair of the essential 3'-terminal CCA sequence in tRNAs without using a nucleic acid template. Adds these three nucleotides in the order of C, C, and A to the tRNA nucleotide-73, using CTP and ATP as substrates and producing inorganic pyrophosphate. tRNA 3'-terminal CCA addition is required both for tRNA processing and repair. Also involved in tRNA surveillance by mediating tandem CCA addition to generate a CCACCA at the 3' terminus of unstable tRNAs. While stable tRNAs receive only 3'-terminal CCA, unstable tRNAs are marked with CCACCA and rapidly degraded. The chain is Multifunctional CCA protein from Alkalilimnicola ehrlichii (strain ATCC BAA-1101 / DSM 17681 / MLHE-1).